Here is a 262-residue protein sequence, read N- to C-terminus: Glutamate racemase (262 aa).

Residues 5-6 (DS) and 37-38 (YG) each bind substrate. The active-site Proton donor/acceptor is Cys69. 70–71 (NT) lines the substrate pocket. The active-site Proton donor/acceptor is the Cys181. Residue 182 to 183 (TH) participates in substrate binding.

This sequence belongs to the aspartate/glutamate racemases family.

It carries out the reaction L-glutamate = D-glutamate. It participates in cell wall biogenesis; peptidoglycan biosynthesis. In terms of biological role, provides the (R)-glutamate required for cell wall biosynthesis. The polypeptide is Glutamate racemase (Buchnera aphidicola subsp. Acyrthosiphon pisum (strain APS) (Acyrthosiphon pisum symbiotic bacterium)).